Reading from the N-terminus, the 554-residue chain is Hyaluronan synthase 3 (554 aa).

The Cytoplasmic segment spans residues M1–S15. Residues L16–I36 form a helical membrane-spanning segment. Over H37–S44 the chain is Extracellular. A helical membrane pass occupies residues F45 to L65. Residues E66–L378 lie on the Cytoplasmic side of the membrane. The chain crosses the membrane as a helical span at residues W379–I399. Over Q400–N409 the chain is Extracellular. The helical transmembrane segment at I410 to F430 threads the bilayer. Residues L431–S441 lie on the Cytoplasmic side of the membrane. The chain crosses the membrane as a helical span at residues L442 to I462. An N-linked (GlcNAc...) asparagine glycan is attached at N463. The Extracellular portion of the chain corresponds to N463–T474. The chain crosses the membrane as a helical span at residues I475–G495. Residues L496–S516 are Cytoplasmic-facing. The chain crosses the membrane as a helical span at residues G517–A537. Over R538–V554 the chain is Extracellular.

It belongs to the NodC/HAS family. It depends on Mg(2+) as a cofactor. O-GlcNAcylation increases the hyaluronan synthase activity, HAS3 stability and its plasma membrane residence. The concentration of UDP-GlcNAc controls the level of O-GlcNAc modification.

The protein localises to the cell membrane. It localises to the golgi apparatus membrane. The protein resides in the golgi apparatus. Its subcellular location is the trans-Golgi network membrane. It is found in the cytoplasmic vesicle. It catalyses the reaction [hyaluronan](n) + UDP-N-acetyl-alpha-D-glucosamine = N-acetyl-beta-D-glucosaminyl-(1-&gt;4)-[hyaluronan](n) + UDP + H(+). The enzyme catalyses N-acetyl-beta-D-glucosaminyl-(1-&gt;4)-[hyaluronan](n) + UDP-alpha-D-glucuronate = [hyaluronan](n+1) + UDP + H(+). Its pathway is glycan biosynthesis; hyaluronan biosynthesis. In terms of biological role, catalyzes the addition of GlcNAc or GlcUA monosaccharides to the nascent hyaluronan polymer. Therefore, it is essential to hyaluronan synthesis a major component of most extracellular matrices that has a structural role in tissues architectures and regulates cell adhesion, migration and differentiation. This is one of three isoenzymes responsible for cellular hyaluronan synthesis. The chain is Hyaluronan synthase 3 (Has3) from Mus musculus (Mouse).